Here is a 220-residue protein sequence, read N- to C-terminus: Deoxyribose-phosphate aldolase (220 aa).

The active-site Proton donor/acceptor is aspartate 89. Lysine 151 serves as the catalytic Schiff-base intermediate with acetaldehyde. The active-site Proton donor/acceptor is the lysine 180.

This sequence belongs to the DeoC/FbaB aldolase family. DeoC type 1 subfamily. In terms of assembly, homotetramer, in solution and in the crystal structure.

The protein resides in the cytoplasm. It catalyses the reaction 2-deoxy-D-ribose 5-phosphate = D-glyceraldehyde 3-phosphate + acetaldehyde. It participates in carbohydrate degradation; 2-deoxy-D-ribose 1-phosphate degradation; D-glyceraldehyde 3-phosphate and acetaldehyde from 2-deoxy-alpha-D-ribose 1-phosphate: step 2/2. Catalyzes a reversible aldol reaction between acetaldehyde and D-glyceraldehyde 3-phosphate to generate 2-deoxy-D-ribose 5-phosphate. The protein is Deoxyribose-phosphate aldolase of Thermus thermophilus (strain ATCC 27634 / DSM 579 / HB8).